The primary structure comprises 291 residues: ATP synthase gamma chain (291 aa).

Belongs to the ATPase gamma chain family. In terms of assembly, F-type ATPases have 2 components, CF(1) - the catalytic core - and CF(0) - the membrane proton channel. CF(1) has five subunits: alpha(3), beta(3), gamma(1), delta(1), epsilon(1). CF(0) has three main subunits: a, b and c.

It is found in the cell inner membrane. Functionally, produces ATP from ADP in the presence of a proton gradient across the membrane. The gamma chain is believed to be important in regulating ATPase activity and the flow of protons through the CF(0) complex. The sequence is that of ATP synthase gamma chain from Ralstonia nicotianae (strain ATCC BAA-1114 / GMI1000) (Ralstonia solanacearum).